We begin with the raw amino-acid sequence, 232 residues long: 5'-methylthioadenosine/S-adenosylhomocysteine nucleosidase (232 aa).

Glu-12 serves as the catalytic Proton acceptor. Substrate contacts are provided by residues Gly-78, Val-153, and 174 to 175 (ME). Asp-198 acts as the Proton donor in catalysis.

It belongs to the PNP/UDP phosphorylase family. MtnN subfamily.

It catalyses the reaction S-adenosyl-L-homocysteine + H2O = S-(5-deoxy-D-ribos-5-yl)-L-homocysteine + adenine. It carries out the reaction S-methyl-5'-thioadenosine + H2O = 5-(methylsulfanyl)-D-ribose + adenine. The enzyme catalyses 5'-deoxyadenosine + H2O = 5-deoxy-D-ribose + adenine. It functions in the pathway amino-acid biosynthesis; L-methionine biosynthesis via salvage pathway; S-methyl-5-thio-alpha-D-ribose 1-phosphate from S-methyl-5'-thioadenosine (hydrolase route): step 1/2. Its function is as follows. Catalyzes the irreversible cleavage of the glycosidic bond in both 5'-methylthioadenosine (MTA) and S-adenosylhomocysteine (SAH/AdoHcy) to adenine and the corresponding thioribose, 5'-methylthioribose and S-ribosylhomocysteine, respectively. Also cleaves 5'-deoxyadenosine, a toxic by-product of radical S-adenosylmethionine (SAM) enzymes, into 5-deoxyribose and adenine. The sequence is that of 5'-methylthioadenosine/S-adenosylhomocysteine nucleosidase from Photobacterium profundum (strain SS9).